A 601-amino-acid chain; its full sequence is MSDNRSHIEEKYQWDLTTVFATDELWETEVVELTQAIDNAKGFSGHLLDSSQSLLEITEVELDLSRRLEKVYVYASMKNDQDTTVAKYQEFQAKATALYAKFSETFSFYEPELLQLSESDYQSFLLEMPDLQKYDHFFEKIFANKPHVLSQNEEELLAGASEIFGAAGETFEILDNADMVFPVVKNAKGEEVELTHGNFISLMESSDRTVRKEAYQAMYSTYEQFQHTYAKTLQTNVKSQNFKARVHHYQSARQSALSANFIPEEVYETLIKTVNHHLPLLHRYMKLRQKVLGLDDLKMYDVYTPLSQMDMSFTYDEALKKSEEVLAIFGEVYSERVHRAFTERWIDVHVNKGKRSGAYSGGSYDTNAFMLLNWQDTLDNLYTLVHETGHSLHSTFTRENQPYVYGDYSIFLAEIASTTNENILTETLLKEVKDDKNRFAILNHYLDGFKGTIFRQTQFAEFEHAIHVADQEGQVLTSEYLNNLYAELNEKYYGLTKEDNHFIQYEWARIPHFYYNYYVFQYATGFAAANYLAERIVNGNPEDKEAYLNYLKAGNSDYPLNVIAKAGVDMTSADYLDAAFRVFEERLVELENLVAKGVHND.

His386 lines the Zn(2+) pocket. The active site involves Glu387. Zn(2+)-binding residues include His390 and His393.

The protein belongs to the peptidase M3B family. Zn(2+) serves as cofactor.

The protein resides in the cytoplasm. Has oligopeptidase activity and degrades a variety of small bioactive peptides, including bradykinin, neurotensin, and peptide fragments of substance P and adrenocorticotropin. Also hydrolyzes the synthetic collagen-like substrate N-(3-[2-furyl]acryloyl)-Leu-Gly-Pro-Ala (FALGPA). This is Group B oligopeptidase PepB (pepB) from Streptococcus agalactiae serotype III (strain NEM316).